Here is a 407-residue protein sequence, read N- to C-terminus: Phenazine 1,6-dicarboxylic acid hydroxylase PhzS (407 aa).

Positions 17, 134, and 313 each coordinate FAD.

Requires FAD as cofactor.

The enzyme catalyses phenazine-1,6-dicarboxylate + NADH + O2 + 2 H(+) = 6-hydroxyphenazine-1-carboxylate + CO2 + NAD(+) + H2O. It catalyses the reaction 6-hydroxyphenazine-1-carboxylate + NADH + O2 + 2 H(+) = 1,6-dihydroxyphenazine + CO2 + NAD(+) + H2O. It carries out the reaction phenazine-1-carboxylate + NADH + O2 + 2 H(+) = 1-hydroxyphenazine + CO2 + NAD(+) + H2O. Functionally, involved in the biosynthesis of phenazine natural products including myxin, an N(5),N(10)-dioxide phenazine antiobiotic, which has antimicrobial activity. Catalyzes the decarboxylative hydroxylations of phenazine 1,6-dicarboxylic acid (PDC) to produce 1,6-dihydroxyphenazine (DHP). Low activity with phenazine 1-carboxylic acid (PCA) to produce 1-hydroxyphenazine. The sequence is that of Phenazine 1,6-dicarboxylic acid hydroxylase PhzS from Lysobacter antibioticus.